The primary structure comprises 216 residues: uncharacterized protein (216 aa).

The 4Fe-4S ferredoxin-type domain maps to 18–47 (PPDSPIEDRCGSCNICVDSCPTGALVQGGQ). 7 residues coordinate [4Fe-4S] cluster: C27, C30, C33, C37, C79, C82, and C86.

This is an uncharacterized protein from Geobacillus stearothermophilus (Bacillus stearothermophilus).